A 327-amino-acid chain; its full sequence is GrpE protein homolog 2, mitochondrial (327 aa).

The transit peptide at 1–39 (MLVLRILSRVTRNAGIRSSLSAVTLPARNQTPVFSSRFH) directs the protein to the mitochondrion. Residues 68-140 (SSSTSPESDE…DSESDDDELS (73 aa)) form a disordered region. Basic and acidic residues-rich tracts occupy residues 75-93 (SDEK…EKPT) and 103-113 (SESKDSVTDSA). The segment covering 130–140 (SDSESDDDELS) has biased composition (acidic residues).

The protein belongs to the GrpE family. In terms of assembly, probable component of the PAM complex, at least composed of SSC1 (mtHsp70), MGE1, TIM44, PAM16/TIM16, PAM17 and PAM18/TIM14. Interacts with SSQ1.

The protein resides in the mitochondrion matrix. Essential component of the PAM complex, a complex required for the translocation of transit peptide-containing proteins from the inner membrane into the mitochondrial matrix in an ATP-dependent manner. Seems to control the nucleotide-dependent binding of mitochondrial HSP70 to substrate proteins. Binds ATP. Interacts with copper ions Cu(2+). Confers thermotolerance to long-term exposure at moderately high temperature (TMHT at 35 degrees Celsius). The protein is GrpE protein homolog 2, mitochondrial of Arabidopsis thaliana (Mouse-ear cress).